The following is a 284-amino-acid chain: Proline-rich protein 32 (284 aa).

3 disordered regions span residues 59–80, 97–119, and 143–171; these read RPPFNVPRTGARIPQNPRAPRH, EINSSEGLESQSQKGHDSINMSQ, and SGNNSKPYIPVPRSQGFFPPRGSQSRGPP.

This Mus musculus (Mouse) protein is Proline-rich protein 32 (Prr32).